The sequence spans 1325 residues: Cyclic nucleotide-gated channel beta-1 (1325 aa).

Disordered regions lie at residues 1–124 (MLGW…QVAV), 147–198 (PQPV…SLWL), 227–279 (AVLD…PGDP), 340–470 (WEDA…LDSC), 482–637 (LERT…SQNS), and 659–694 (KEKL…PAEA). Residues 1 to 732 (MLGWVQRVLP…SIDPLTNLMY (732 aa)) lie on the Cytoplasmic side of the membrane. The segment covering 43 to 81 (PQQEPEPEPEPEPEPEPEPEPEPEPEPEPEPEPVPEEAP) has biased composition (acidic residues). Residues 105 to 121 (LQETQVADPAQPTSQAQ) are compositionally biased toward polar residues. The segment covering 370–379 (IPRELTKIQE) has biased composition (basic and acidic residues). Acidic residues-rich tracts occupy residues 380 to 393 (ERED…EEKE), 418 to 463 (EEKE…EEEP), and 495 to 517 (LPEE…EEKK). The segment covering 518 to 527 (EEEVEKKEEG) has biased composition (basic and acidic residues). Residues 560 to 571 (TLPPPERPPPSP) show a composition bias toward pro residues. The segment at 633–643 (ASQNSAIINDR) is calmodulin-binding CaM1. A helical transmembrane segment spans residues 733-754 (ILWLFFVVLAWNWNCWLIPVRW). Topologically, residues 755–763 (AFPYQRADN) are extracellular. Residues 764–785 (IHFWLLMDYLCDFIYLLDITVF) form a helical membrane-spanning segment. The Cytoplasmic portion of the chain corresponds to 786–800 (QMRLQFVKGGDIITD). The chain crosses the membrane as a helical span at residues 801–820 (KKEMRNNYLKSRRFKMDLLC). The Extracellular portion of the chain corresponds to 821–836 (LLPLDFLYLKLGINPL). Residues 837 to 849 (LRLPRCLKYMAFF) traverse the membrane as a helical segment. At 850 to 861 (EFNNRLEAILSK) the chain is on the cytoplasmic side. The helical transmembrane segment at 862-884 (AYVYRVIRTTAYLLYSLHLNSCL) threads the bilayer. Residues 862–961 (AYVYRVIRTT…IGQMRDVVGA (100 aa)) are ion conduction pathway. The Extracellular segment spans residues 885–907 (YYWASAFQGIGSTHWVYDGVGNS). 2 helical membrane-spanning segments follow: residues 908-934 (YIRC…LFEI) and 935-960 (VFQL…DVVG). At 961–1325 (AATAGQTYYR…VLEEKKEGAE (365 aa)) the chain is on the cytoplasmic side. Residues 964-1040 (AGQTYYRSCM…SIVSKVALFQ (77 aa)) form a C-linker region. A cNMP-binding domain region spans residues 1038–1142 (LFQGCDRQMI…LDKKDLNEIL (105 aa)). A cyclic nucleotide-binding domain region spans residues 1044–1160 (RQMIFDMLKR…LLRKKARRML (117 aa)). 3',5'-cyclic GMP is bound by residues G1105, E1106, S1108, R1118, and T1119. Position 1118 (R1118) interacts with 3',5'-cyclic AMP. Residues 1224–1230 (QQQLLEQ) form a calmodulin-binding CaM2 region. Over residues 1226–1250 (QLLEQAKSSQEAGGEEGSGATDQPA) the composition is skewed to low complexity. The segment at 1226-1325 (QLLEQAKSSQ…VLEEKKEGAE (100 aa)) is disordered. Residues 1262–1279 (KPPGPPEPSAQSSPPPAS) are compositionally biased toward pro residues.

This sequence belongs to the cyclic nucleotide-gated cation channel (TC 1.A.1.5) family. CNGB1 subfamily. In terms of tissue distribution, rod outer segments. Olfactory sensory neurons.

The protein localises to the cell projection. The protein resides in the cilium membrane. The enzyme catalyses Ca(2+)(in) = Ca(2+)(out). It carries out the reaction Na(+)(in) = Na(+)(out). The catalysed reaction is K(+)(in) = K(+)(out). It catalyses the reaction NH4(+)(in) = NH4(+)(out). The enzyme catalyses Rb(+)(in) = Rb(+)(out). It carries out the reaction Li(+)(in) = Li(+)(out). The catalysed reaction is Cs(+)(in) = Cs(+)(out). In terms of biological role, pore-forming subunit of the rod cyclic nucleotide-gated channel. Mediates rod photoresponses at dim light converting transient changes in intracellular cGMP levels into electrical signals. In the dark, cGMP levels are high and keep the channel open enabling a steady inward current carried by Na(+) and Ca(2+) ions that leads to membrane depolarization and neurotransmitter release from synaptic terminals. Upon photon absorption cGMP levels decline leading to channel closure and membrane hyperpolarization that ultimately slows neurotransmitter release and signals the presence of light, the end point of the phototransduction cascade. Pore-forming subunit of the olfactory cyclic nucleotide-gated channel. Operates in the cilia of olfactory sensory neurons where chemical stimulation of the odorant is converted to an electrical signal. Mediates odorant-induced cAMP-dependent Ca(2+) influx triggering neuron depolarization. The rise of intracellular Ca(2+) levels potentiates the olfactory response by activating Ca(2+)-dependent Cl(-) channels, but it also serves as a negative feedback signal to desensitize the channel for rapid adaptation to odorants. Conducts cGMP- and cAMP-gated ion currents, with permeability for monovalent and divalent cations. The selectivity for Ca(2+) over Na(+) increases with cGMP concentrations, whereas the selectivity among monovalent ions is independent of the cGMP levels. The chain is Cyclic nucleotide-gated channel beta-1 from Mus musculus (Mouse).